A 63-amino-acid chain; its full sequence is MKAQELRNKNVEELNAELNNLLGEQFKLRMQAATGQLQQTHQLKQVRRNIARVKTVLNQKAGE.

This sequence belongs to the universal ribosomal protein uL29 family.

This chain is Large ribosomal subunit protein uL29, found in Actinobacillus succinogenes (strain ATCC 55618 / DSM 22257 / CCUG 43843 / 130Z).